A 585-amino-acid chain; its full sequence is Isocitrate dehydrogenase kinase/phosphatase (585 aa).

ATP contacts are provided by residues alanine 315–methionine 321 and lysine 336. Aspartate 371 is a catalytic residue.

Belongs to the AceK family.

It localises to the cytoplasm. It carries out the reaction L-seryl-[isocitrate dehydrogenase] + ATP = O-phospho-L-seryl-[isocitrate dehydrogenase] + ADP + H(+). Functionally, bifunctional enzyme which can phosphorylate or dephosphorylate isocitrate dehydrogenase (IDH) on a specific serine residue. This is a regulatory mechanism which enables bacteria to bypass the Krebs cycle via the glyoxylate shunt in response to the source of carbon. When bacteria are grown on glucose, IDH is fully active and unphosphorylated, but when grown on acetate or ethanol, the activity of IDH declines drastically concomitant with its phosphorylation. The chain is Isocitrate dehydrogenase kinase/phosphatase from Photorhabdus laumondii subsp. laumondii (strain DSM 15139 / CIP 105565 / TT01) (Photorhabdus luminescens subsp. laumondii).